The following is a 365-amino-acid chain: Chorismate synthase (365 aa).

The NADP(+) site is built by Arg48 and Arg54. FMN-binding positions include 125–127 (RSS), 238–239 (NA), Ala278, 293–297 (KPTSS), and Arg319.

It belongs to the chorismate synthase family. Homotetramer. Requires FMNH2 as cofactor.

It catalyses the reaction 5-O-(1-carboxyvinyl)-3-phosphoshikimate = chorismate + phosphate. Its pathway is metabolic intermediate biosynthesis; chorismate biosynthesis; chorismate from D-erythrose 4-phosphate and phosphoenolpyruvate: step 7/7. Catalyzes the anti-1,4-elimination of the C-3 phosphate and the C-6 proR hydrogen from 5-enolpyruvylshikimate-3-phosphate (EPSP) to yield chorismate, which is the branch point compound that serves as the starting substrate for the three terminal pathways of aromatic amino acid biosynthesis. This reaction introduces a second double bond into the aromatic ring system. The sequence is that of Chorismate synthase from Pseudoalteromonas translucida (strain TAC 125).